A 422-amino-acid polypeptide reads, in one-letter code: Lactoyl-CoA dehydratase subunit alpha (422 aa).

Belongs to the FldB/FldC dehydratase alpha/beta subunit family. As to quaternary structure, heterodimer of an alpha (LcdA) and a beta (LcdB) subunit. It depends on [4Fe-4S] cluster as a cofactor. FMN serves as cofactor. The cofactor is riboflavin. Requires Mg(2+) as cofactor.

It carries out the reaction (R)-lactoyl-CoA = acryloyl-CoA + H2O. It catalyses the reaction (2R)-hydroxybutanoyl-CoA = (2E)-butenoyl-CoA + H2O. Its activity is regulated as follows. Activated by the LcdC protein. In terms of biological role, involved in the acrylate pathway for the conversion of D-lactic acid to propionic acid. Catalyzes the reversible dehydration of Lactoyl-CoA and 2-hydroxybutyroyl-CoA to acryloyl-CoA and crotonyl-CoA, respectively. This Anaerotignum propionicum (Clostridium propionicum) protein is Lactoyl-CoA dehydratase subunit alpha (lcdA).